The sequence spans 519 residues: Anthranilate synthase component 1 (519 aa).

Residues serine 39 and 290–292 (PYM) contribute to the L-tryptophan site. Chorismate is bound at residue 327-328 (GT). Glutamate 360 is a binding site for Mg(2+). Chorismate contacts are provided by residues tyrosine 448, arginine 468, 482-484 (GAG), and glycine 484. Glutamate 497 contributes to the Mg(2+) binding site.

This sequence belongs to the anthranilate synthase component I family. As to quaternary structure, heterotetramer consisting of two non-identical subunits: a beta subunit (TrpG) and a large alpha subunit (TrpE). It depends on Mg(2+) as a cofactor.

It carries out the reaction chorismate + L-glutamine = anthranilate + pyruvate + L-glutamate + H(+). It functions in the pathway amino-acid biosynthesis; L-tryptophan biosynthesis; L-tryptophan from chorismate: step 1/5. Feedback inhibited by tryptophan. In terms of biological role, part of a heterotetrameric complex that catalyzes the two-step biosynthesis of anthranilate, an intermediate in the biosynthesis of L-tryptophan. In the first step, the glutamine-binding beta subunit (TrpG) of anthranilate synthase (AS) provides the glutamine amidotransferase activity which generates ammonia as a substrate that, along with chorismate, is used in the second step, catalyzed by the large alpha subunit of AS (TrpE) to produce anthranilate. In the absence of TrpG, TrpE can synthesize anthranilate directly from chorismate and high concentrations of ammonia. The polypeptide is Anthranilate synthase component 1 (trpE) (Serratia marcescens).